The sequence spans 1265 residues: Kinesin-related protein 13 (1265 aa).

Positions asparagine 23–isoleucine 350 constitute a Kinesin motor domain. Glycine 106–threonine 113 lines the ATP pocket. Residues leucine 331–isoleucine 459 are a coiled coil. 5 disordered regions span residues lysine 918–isoleucine 1026, serine 1085–leucine 1119, leucine 1127–serine 1146, leucine 1158–leucine 1214, and phenylalanine 1245–lysine 1265. A compositionally biased stretch (low complexity) spans isoleucine 930–serine 951. 3 stretches are compositionally biased toward polar residues: residues histidine 960–cysteine 980, leucine 1003–isoleucine 1026, and serine 1085–leucine 1097. Composition is skewed to low complexity over residues glutamine 1100–leucine 1119 and glutamine 1128–serine 1146. Positions leucine 1158–aspartate 1169 are enriched in acidic residues. A compositionally biased stretch (low complexity) spans serine 1174–valine 1195. Residues threonine 1250–lysine 1265 are compositionally biased toward polar residues.

It belongs to the TRAFAC class myosin-kinesin ATPase superfamily. Kinesin family. BimC subfamily.

Its subcellular location is the cytoplasm. It localises to the cytoskeleton. Microtubule-associated force-producing protein that plays a role in organelle transport. Its motor activity is directed toward the microtubule's plus end. Cooperates with dynein to control the spindle elongation rate, but is dispensable for mitosis. This Dictyostelium discoideum (Social amoeba) protein is Kinesin-related protein 13 (kif13).